Consider the following 428-residue polypeptide: Putative zinc finger protein 355P (428 aa).

Residues Met-1–Ile-64 enclose the KRAB domain. 3 C2H2-type zinc fingers span residues Tyr-72 to His-94, Tyr-100 to His-122, and Tyr-128 to His-150. The C2H2-type 4; degenerate zinc finger occupies Tyr-156 to His-178. Residues Tyr-184–His-206 form a C2H2-type 5; degenerate zinc finger. The segment at Cys-212–His-234 adopts a C2H2-type 6; degenerate zinc-finger fold. The C2H2-type 7; degenerate zinc finger occupies Tyr-263–His-285. C2H2-type zinc fingers lie at residues Tyr-291–His-313 and Tyr-335–His-357. The C2H2-type 10; degenerate zinc finger occupies Tyr-363 to Arg-385. Residues Tyr-391–His-413 form a C2H2-type 11 zinc finger.

The protein belongs to the krueppel C2H2-type zinc-finger protein family.

The protein resides in the nucleus. Its function is as follows. May be involved in transcriptional regulation. The chain is Putative zinc finger protein 355P (ZNF355P) from Homo sapiens (Human).